The following is a 361-amino-acid chain: Chorismate synthase (361 aa).

Arg48 and Arg54 together coordinate NADP(+). FMN-binding positions include 125-127, 238-239, Gly278, 293-297, and Arg319; these read RSS, NA, and KPTSS.

It belongs to the chorismate synthase family. As to quaternary structure, homotetramer. Requires FMNH2 as cofactor.

The enzyme catalyses 5-O-(1-carboxyvinyl)-3-phosphoshikimate = chorismate + phosphate. It participates in metabolic intermediate biosynthesis; chorismate biosynthesis; chorismate from D-erythrose 4-phosphate and phosphoenolpyruvate: step 7/7. Functionally, catalyzes the anti-1,4-elimination of the C-3 phosphate and the C-6 proR hydrogen from 5-enolpyruvylshikimate-3-phosphate (EPSP) to yield chorismate, which is the branch point compound that serves as the starting substrate for the three terminal pathways of aromatic amino acid biosynthesis. This reaction introduces a second double bond into the aromatic ring system. This chain is Chorismate synthase, found in Yersinia enterocolitica serotype O:8 / biotype 1B (strain NCTC 13174 / 8081).